The sequence spans 319 residues: Mitochondrial fission regulator 1-like-A (319 aa).

A disordered region spans residues 1–37 (MASLGAAAEPERNLFGKDEAEAYESPEGRRSGRKKRT). Over residues 9 to 30 (EPERNLFGKDEAEAYESPEGRR) the composition is skewed to basic and acidic residues.

It belongs to the MTFR1 family.

The protein resides in the mitochondrion outer membrane. Mitochondrial protein required for adaptation of miochondrial dynamics to metabolic changes. Regulates mitochondrial morphology at steady state and mediates AMPK-dependent stress-induced mitochondrial fragmentation via the control of OPA1 levels. This is Mitochondrial fission regulator 1-like-A (mtfr1l-a) from Xenopus laevis (African clawed frog).